We begin with the raw amino-acid sequence, 412 residues long: MSKKNIKKVVLAYSGGLDTSAIIPWLKENYDCEVIAFAADVGQGDEELEGLREKAIKTGASECYIVDLKDEFVSDYIYPTITTGAVYEGQYLLGTSMARPIIAKAQVEIARKVGADALCHGCTGKGNDQVRFEGTFAALAPELTVIAPWREWDMVSREDLLAYLAERDIKTTASATKIYSRDANAWHISHEGGELEDPWCEPTKEVWTMTVSPEDAPNTPERVEVSFEHGRMVKVNGEALSPYQCLVKLNELAGAHGVGRIDIVENRLVGMKSRGCYETPGGTVMLAAYKALESLVLDKAALKYREQIGLEFSHVMYDGRWFTPLNDALLAGAASFADKVTGDIVVKLYKGQATVTQRRSPNSLYSEDFATFGADDVYDQSHAEGFIRLYSLSSRISALNKEGIPFKNTGIE.

ATP is bound by residues 12-20 (AYSGGLDTS) and Ala-39. L-citrulline-binding residues include Tyr-91 and Ser-96. Gly-121 contributes to the ATP binding site. L-aspartate-binding residues include Thr-123, Asn-127, and Asp-128. An L-citrulline-binding site is contributed by Asn-127. Positions 131, 180, 189, 265, and 277 each coordinate L-citrulline.

It belongs to the argininosuccinate synthase family. Type 1 subfamily. As to quaternary structure, homotetramer.

The protein resides in the cytoplasm. It carries out the reaction L-citrulline + L-aspartate + ATP = 2-(N(omega)-L-arginino)succinate + AMP + diphosphate + H(+). The protein operates within amino-acid biosynthesis; L-arginine biosynthesis; L-arginine from L-ornithine and carbamoyl phosphate: step 2/3. This is Argininosuccinate synthase from Pseudoalteromonas atlantica (strain T6c / ATCC BAA-1087).